Reading from the N-terminus, the 308-residue chain is Ava biosynthesis cluster protein O (308 aa).

It functions in the pathway secondary metabolite biosynthesis. Part of the cluster that mediates the biosynthesis of a highly modified cyclo-arginine-tryptophan dipeptide (cRW). The first step of the pathway is perfornmed by the arginine-containing cyclodipeptide synthase (RCPDS) avaA that acts as the scaffold-generating enzyme and is responsible for formation of the cyclo-Arg-Trp (cRW) diketopiperazine. AvaB then acts as a multifunctional flavoenzyme that is responsible for generating the cyclo-Arg-formylkynurenine DKP, which can be deformylated by avaC. AvaB then further catalyzes an additional N-oxidation followed by cyclization and dehydration. The next step is an N-acetylation of the guanidine group catalyzed by the arginine N-acetyltransferase avaD. The roles of the additional enzymes identified within the ava cluster still have to be determined. The polypeptide is Ava biosynthesis cluster protein O (Aspergillus versicolor).